Reading from the N-terminus, the 442-residue chain is Chromosomal replication initiator protein DnaA (442 aa).

Residues M1–G75 form a domain I, interacts with DnaA modulators region. The tract at residues G75–G104 is domain II. Residues N105 to A322 are domain III, AAA+ region. G150, G152, K153, and T154 together coordinate ATP. The interval N323 to E442 is domain IV, binds dsDNA.

The protein belongs to the DnaA family. As to quaternary structure, oligomerizes as a right-handed, spiral filament on DNA at oriC.

It localises to the cytoplasm. In terms of biological role, plays an essential role in the initiation and regulation of chromosomal replication. ATP-DnaA binds to the origin of replication (oriC) to initiate formation of the DNA replication initiation complex once per cell cycle. Binds the DnaA box (a 9 base pair repeat at the origin) and separates the double-stranded (ds)DNA. Forms a right-handed helical filament on oriC DNA; dsDNA binds to the exterior of the filament while single-stranded (ss)DNA is stabiized in the filament's interior. The ATP-DnaA-oriC complex binds and stabilizes one strand of the AT-rich DNA unwinding element (DUE), permitting loading of DNA polymerase. After initiation quickly degrades to an ADP-DnaA complex that is not apt for DNA replication. Binds acidic phospholipids. The protein is Chromosomal replication initiator protein DnaA of Xanthomonas euvesicatoria pv. vesicatoria (strain 85-10) (Xanthomonas campestris pv. vesicatoria).